We begin with the raw amino-acid sequence, 183 residues long: Hypoxanthine-guanine-xanthine phosphoribosyltransferase (183 aa).

Residues 102 to 110 (EDIIDTGLT), K134, and D163 contribute to the GMP site. The Proton acceptor role is filled by D106. Residue D163 participates in Mg(2+) binding.

In terms of assembly, homodimer. Mg(2+) is required as a cofactor.

The protein localises to the cytoplasm. The enzyme catalyses IMP + diphosphate = hypoxanthine + 5-phospho-alpha-D-ribose 1-diphosphate. It carries out the reaction GMP + diphosphate = guanine + 5-phospho-alpha-D-ribose 1-diphosphate. The catalysed reaction is XMP + diphosphate = xanthine + 5-phospho-alpha-D-ribose 1-diphosphate. It functions in the pathway purine metabolism; GMP biosynthesis via salvage pathway; GMP from guanine: step 1/1. The protein operates within purine metabolism; IMP biosynthesis via salvage pathway; IMP from hypoxanthine: step 1/1. Its pathway is purine metabolism; XMP biosynthesis via salvage pathway; XMP from xanthine: step 1/1. In terms of biological role, essential in nucleic acid metabolism of T.foetus because the parasite is unable to synthesize purine nucleotides de novo and relies on the HGXPRTase activities for its purine requirements by salvaging purine bases from the host. Works with guanine, hypoxanthine and xanthine. The sequence is that of Hypoxanthine-guanine-xanthine phosphoribosyltransferase (HPT) from Tritrichomonas foetus (Trichomonas foetus).